The following is an 811-amino-acid chain: Mitochondrial intermediate peptidase (811 aa).

The transit peptide at 1–25 directs the protein to the mitochondrion; it reads MRSGSRLSNYLVRLSGRVSFTQKRS. Residues 423–450 are disordered; the sequence is TENGEKASTDTSTSTTTSTTTTDSTTTT. The span at 431 to 450 shows a compositional bias: low complexity; that stretch reads TDTSTSTTTSTTTTDSTTTT. Histidine 593 contributes to the Zn(2+) binding site. Residue glutamate 594 is part of the active site. Zn(2+) is bound by residues histidine 597 and histidine 600.

It belongs to the peptidase M3 family. Requires Zn(2+) as cofactor.

It localises to the mitochondrion matrix. It carries out the reaction Release of an N-terminal octapeptide as second stage of processing of some proteins imported into the mitochondrion.. Functionally, cleaves proteins, imported into the mitochondrion, to their mature size. While most mitochondrial precursor proteins are processed to the mature form in one step by mitochondrial processing peptidase (MPP), the sequential cleavage by MIP of an octapeptide after initial processing by MPP is a required step for a subgroup of nuclear-encoded precursor proteins destined for the matrix or the inner membrane. The polypeptide is Mitochondrial intermediate peptidase (OCT1) (Lodderomyces elongisporus (strain ATCC 11503 / CBS 2605 / JCM 1781 / NBRC 1676 / NRRL YB-4239) (Yeast)).